Reading from the N-terminus, the 260-residue chain is Exosome complex component Rrp4 (260 aa).

Residues 59–128 enclose the S1 motif domain; the sequence is NDVVIGIVIV…NSMKVELALR (70 aa). A KH domain is found at 136 to 194; that stretch reads KTGQIVEVEPVKVPRVIGHGGSMISMLKKETNCSIFVGQNGRIWIDGKDDDVELLSKAL.

It belongs to the RRP4 family. In terms of assembly, component of the archaeal exosome complex. Forms a trimer of Rrp4 and/or Csl4 subunits. The trimer associates with a hexameric ring-like arrangement composed of 3 Rrp41-Rrp42 heterodimers.

Its subcellular location is the cytoplasm. Functionally, non-catalytic component of the exosome, which is a complex involved in RNA degradation. Increases the RNA binding and the efficiency of RNA degradation. Confers strong poly(A) specificity to the exosome. This Methanosarcina barkeri (strain Fusaro / DSM 804) protein is Exosome complex component Rrp4.